A 412-amino-acid polypeptide reads, in one-letter code: tRNA (guanine-N(7)-)-methyltransferase non-catalytic subunit WDR4 (412 aa).

The residue at position 2 (A2) is an N-acetylalanine. 7 WD repeats span residues 3 to 40 (GSVG…IYDC), 50 to 90 (NKGE…LFRT), 94 to 131 (QCLS…SFSV), 137 to 174 (CGRL…VSWA), 180 to 218 (IESF…LWEY), 230 to 273 (ASLQ…IFQL), and 319 to 373 (PVGD…SYLK). The interval 377–412 (ERLQQQLEKKQRRRSPPPGPDGHAKKMRPGEATLSC) is disordered. Residues S391 and S411 each carry the phosphoserine modification.

Belongs to the WD repeat TRM82 family. Non-catalytic component of the METTL1-WDR4 complex, composed of METTL1 and WDR4. Interacts with FEN1; the interaction is direct.

The protein resides in the nucleus. It is found in the chromosome. Its pathway is tRNA modification; N(7)-methylguanine-tRNA biosynthesis. In terms of biological role, non-catalytic component of the METTL1-WDR4 methyltransferase complex required for the formation of N(7)-methylguanine in a subset of RNA species, such as tRNAs, mRNAs and microRNAs (miRNAs). In the METTL1-WDR4 methyltransferase complex, WDR4 acts as a scaffold for tRNA-binding. Required for the formation of N(7)-methylguanine at position 46 (m7G46) in a large subset of tRNAs that contain the 5'-RAGGU-3' motif within the variable loop. M7G46 interacts with C13-G22 in the D-loop to stabilize tRNA tertiary structure and protect tRNAs from decay. Also required for the formation of N(7)-methylguanine at internal sites in a subset of mRNAs. Also required for methylation of a specific subset of miRNAs, such as let-7. Independently of METTL1, also plays a role in genome stability: localizes at the DNA replication site and regulates endonucleolytic activities of FEN1. The polypeptide is tRNA (guanine-N(7)-)-methyltransferase non-catalytic subunit WDR4 (Homo sapiens (Human)).